The following is a 514-amino-acid chain: Putative fucosyltransferase 10 (514 aa).

Asn185, Asn210, Asn355, Asn377, and Asn456 each carry an N-linked (GlcNAc...) asparagine glycan.

Belongs to the glycosyltransferase 37 family. As to expression, expressed in root, leaves, stems and seedlings.

The protein resides in the golgi apparatus. It functions in the pathway protein modification; protein glycosylation. May be involved in cell wall biosynthesis. May act as a fucosyltransferase. In Arabidopsis thaliana (Mouse-ear cress), this protein is Putative fucosyltransferase 10 (FUT10).